A 337-amino-acid chain; its full sequence is Glycine N(alpha)-acyltransferase (337 aa).

This sequence belongs to the acetyltransferase family.

The catalysed reaction is a (3R)-hydroxyacyl-[ACP] + glycine = a lyso-glycine lipid + holo-[ACP] + H(+). It carries out the reaction (3R)-hydroxyhexadecanoyl-[ACP] + glycine = N-[(3R)-3-hydroxyhexadecanoyl]-glycine + holo-[ACP] + H(+). It participates in lipid metabolism. Its function is as follows. Is involved in the production of glycine lipids (GL), which are phosphorus-free membrane lipids important for fitness during growth of the human gut bacterium B.thetaiotaomicron in vivo and in vitro. Catalyzes the first step of GL biosynthesis, i.e. the N-acylation of glycine via addition of a 3-hydroxy fatty acyl group, to form a range of monoacylated glycine (also named lyso-glycine lipids or lyso-GL). Is important for the ability of B.thetaiotaomicron to adapt to stress and colonize the mammalian gut. Also seems to be required for the production of flavolipin, an acylated serine-glycine dipeptide. This is Glycine N(alpha)-acyltransferase from Bacteroides thetaiotaomicron (strain ATCC 29148 / DSM 2079 / JCM 5827 / CCUG 10774 / NCTC 10582 / VPI-5482 / E50).